The sequence spans 1149 residues: Nitric oxide synthase, inducible (1149 aa).

Residues 22–83 (KDINNNVGKA…HKPSPTCSQH (62 aa)) form a disordered region. Residues 23-27 (DINNN) carry the DINNN-motif; mediates interaction with SPSB1, SPSB2 and SPSB4 motif. The span at 50–61 (KHQNGSSQSLTG) shows a compositional bias: polar residues. Zn(2+) is bound by residues Cys109 and Cys114. Ser117 is a binding site for (6R)-L-erythro-5,6,7,8-tetrahydrobiopterin. A heme b-binding site is contributed by Cys199. Residues Gln262, Trp371, Tyr372, and Glu376 each contribute to the L-arginine site. Residues Arg380, Ile461, Trp462, and Phe475 each contribute to the (6R)-L-erythro-5,6,7,8-tetrahydrobiopterin site. Position 490 (Tyr490) interacts with heme b. The interval 514-534 (FRVLAKATLFASLLMRKMMAS) is calmodulin-binding. A Flavodoxin-like domain is found at 538–676 (ATILFATETG…AFCTWAVQTF (139 aa)). FMN contacts are provided by Thr544, Glu545, Thr546, Lys548, and Ser549. Phosphotyrosine is present on Tyr574. Positions 590, 591, 627, 632, 634, 660, and 664 each coordinate FMN. The region spanning 729-969 (TDVFTMRLKS…VRSVNSFQLP (241 aa)) is the FAD-binding FR-type domain. Arg749 is an NADP(+) binding site. FAD is bound by residues His771, Arg905, Tyr907, Ser908, Thr923, and Ala925. NADP(+) is bound at residue Thr928. FAD-binding residues include Tyr929, Val942, Cys943, and Ser944. Residues Thr983, Arg1016, Ser1045, Arg1046, Lys1052, Tyr1054, Gln1056, and Asp1089 each coordinate NADP(+).

Belongs to the NOS family. As to quaternary structure, homodimer. Interacts with NHERF1. Interacts with GAPDH; induced by oxidatively-modified low-densitity lipoprotein (LDL(ox)). Interacts with S100A8 and S100A9 to form the iNOS-S100A8/9 transnitrosylase complex. Interacts with SPSB1, SPSB2 and SPSB4. Interacts with ELOC and CUL5 in the presence of SPSB1 or SPSB2 or SPSB4. Forms a complex with ASL, ASS1 and HSP90AA1; the complex regulates cell-autonomous L-arginine synthesis and citrulline recycling while channeling extracellular L-arginine to nitric oxide synthesis pathway. The cofactor is heme b. FAD is required as a cofactor. It depends on FMN as a cofactor. Requires (6R)-L-erythro-5,6,7,8-tetrahydrobiopterin as cofactor. Polyubiquitinated; mediated by SPSB1, SPSB2 and SPSB4, leading to proteasomal degradation. As to expression, expressed in the lung and colon. Not detected in the heart, aorta, liver, kidney, and spleen.

The protein localises to the cytoplasm. The protein resides in the cytosol. It catalyses the reaction 2 L-arginine + 3 NADPH + 4 O2 + H(+) = 2 L-citrulline + 2 nitric oxide + 3 NADP(+) + 4 H2O. With respect to regulation, regulated by calcium/calmodulin. In terms of biological role, produces nitric oxide (NO) which is a messenger molecule with diverse functions throughout the body. In macrophages, NO mediates tumoricidal and bactericidal actions. Also has nitrosylase activity and mediates cysteine S-nitrosylation of cytoplasmic target proteins such PTGS2/COX2. As component of the iNOS-S100A8/9 transnitrosylase complex involved in the selective inflammatory stimulus-dependent S-nitrosylation of GAPDH implicated in regulation of the GAIT complex activity and probably multiple targets including ANXA5, EZR, MSN and VIM. Involved in inflammation, enhances the synthesis of pro-inflammatory mediators such as IL6 and IL8. This Cavia porcellus (Guinea pig) protein is Nitric oxide synthase, inducible (NOS2).